Here is a 173-residue protein sequence, read N- to C-terminus: Dual-action ribosomal maturation protein DarP (173 aa).

It belongs to the DarP family.

Its subcellular location is the cytoplasm. Its function is as follows. Member of a network of 50S ribosomal subunit biogenesis factors which assembles along the 30S-50S interface, preventing incorrect 23S rRNA structures from forming. Promotes peptidyl transferase center (PTC) maturation. In Pseudomonas putida (strain GB-1), this protein is Dual-action ribosomal maturation protein DarP.